Consider the following 95-residue polypeptide: Co-chaperonin GroES (95 aa).

Belongs to the GroES chaperonin family. In terms of assembly, heptamer of 7 subunits arranged in a ring. Interacts with the chaperonin GroEL.

The protein resides in the cytoplasm. Together with the chaperonin GroEL, plays an essential role in assisting protein folding. The GroEL-GroES system forms a nano-cage that allows encapsulation of the non-native substrate proteins and provides a physical environment optimized to promote and accelerate protein folding. GroES binds to the apical surface of the GroEL ring, thereby capping the opening of the GroEL channel. The polypeptide is Co-chaperonin GroES (Chlorobium luteolum (strain DSM 273 / BCRC 81028 / 2530) (Pelodictyon luteolum)).